We begin with the raw amino-acid sequence, 146 residues long: Basic phospholipase A2 beta-bungarotoxin A1 chain (146 aa).

The signal sequence occupies residues 1–19 (MNPAHLLVLPAVCVSFLGA). The propeptide occupies 20–27 (SIIPPQSL). Cystine bridges form between Cys-54/Cys-145, Cys-56/Cys-72, Cys-71/Cys-126, Cys-78/Cys-119, Cys-87/Cys-112, and Cys-105/Cys-117. Residues Tyr-55, Gly-57, and Gly-59 each contribute to the Ca(2+) site. Residue His-75 is part of the active site. Asp-76 is a binding site for Ca(2+). Residue Asp-120 is part of the active site.

The protein belongs to the phospholipase A2 family. Group I subfamily. D49 sub-subfamily. As to quaternary structure, heterodimer with beta-bungarotoxin B chain; disulfide-linked. The A chain has phospholipase A2 activity and the B chain shows homology with the basic protease inhibitors. Requires Ca(2+) as cofactor. Expressed by the venom gland.

The protein localises to the secreted. It carries out the reaction a 1,2-diacyl-sn-glycero-3-phosphocholine + H2O = a 1-acyl-sn-glycero-3-phosphocholine + a fatty acid + H(+). Snake venom phospholipase A2 (PLA2) that inhibits neuromuscular transmission by blocking acetylcholine release from the nerve termini. PLA2 catalyzes the calcium-dependent hydrolysis of the 2-acyl groups in 3-sn-phosphoglycerides. This Bungarus flaviceps flaviceps (Red-headed krait) protein is Basic phospholipase A2 beta-bungarotoxin A1 chain.